We begin with the raw amino-acid sequence, 272 residues long: Hydroxyacylglutathione hydrolase (272 aa).

7 residues coordinate Zn(2+): histidine 62, histidine 64, aspartate 66, histidine 67, histidine 126, aspartate 146, and histidine 184.

This sequence belongs to the metallo-beta-lactamase superfamily. Glyoxalase II family. Monomer. It depends on Zn(2+) as a cofactor.

It catalyses the reaction an S-(2-hydroxyacyl)glutathione + H2O = a 2-hydroxy carboxylate + glutathione + H(+). Its pathway is secondary metabolite metabolism; methylglyoxal degradation; (R)-lactate from methylglyoxal: step 2/2. Functionally, thiolesterase that catalyzes the hydrolysis of S-D-lactoyl-glutathione to form glutathione and D-lactic acid. This chain is Hydroxyacylglutathione hydrolase, found in Saccharophagus degradans (strain 2-40 / ATCC 43961 / DSM 17024).